We begin with the raw amino-acid sequence, 420 residues long: Ribosome biogenesis protein WDR12 homolog (420 aa).

The tract at residues 10-92 is ubiquitin-like (UBL) domain; that stretch reads VQVHLKTKQE…EDAIEIEYVE (83 aa). WD repeat units lie at residues 104–142, 143–185, 192–231, 250–288, 290–329, 335–375, and 379–417; these read LHDD…LTIS, GHTA…NSVE, GHER…AVEG, GHRE…IKTE, STNK…GSVV, GHNA…APLY, and GHGE…ADDA.

It belongs to the WD repeat WDR12/YTM1 family.

The protein localises to the nucleus. Its subcellular location is the nucleolus. It is found in the nucleoplasm. In terms of biological role, required for maturation of ribosomal RNAs and formation of the large ribosomal subunit. This is Ribosome biogenesis protein WDR12 homolog from Drosophila yakuba (Fruit fly).